The chain runs to 514 residues: 3-octaprenyl-4-hydroxybenzoate carboxy-lyase (514 aa).

N177 contacts Mn(2+). Prenylated FMN contacts are provided by residues 180–182, 194–196, and 199–200; these read IYR, RWL, and RG. Residue E243 coordinates Mn(2+). D314 (proton donor) is an active-site residue.

The protein belongs to the UbiD family. In terms of assembly, homohexamer. Prenylated FMN is required as a cofactor. Requires Mn(2+) as cofactor.

The protein localises to the cell membrane. The catalysed reaction is a 4-hydroxy-3-(all-trans-polyprenyl)benzoate + H(+) = a 2-(all-trans-polyprenyl)phenol + CO2. The protein operates within cofactor biosynthesis; ubiquinone biosynthesis. Catalyzes the decarboxylation of 3-octaprenyl-4-hydroxy benzoate to 2-octaprenylphenol, an intermediate step in ubiquinone biosynthesis. In Bordetella petrii (strain ATCC BAA-461 / DSM 12804 / CCUG 43448), this protein is 3-octaprenyl-4-hydroxybenzoate carboxy-lyase.